The chain runs to 241 residues: CRISPR-associated endoribonuclease Cas6 2 (241 aa).

Y28 acts as the Proton acceptor in catalysis. Catalysis depends on H40, which acts as the Proton donor.

It belongs to the CRISPR-associated protein Cas6/Cse3/CasE family.

In terms of biological role, CRISPR (clustered regularly interspaced short palindromic repeat) is an adaptive immune system that provides protection against mobile genetic elements (viruses, transposable elements and conjugative plasmids). CRISPR clusters contain sequences complementary to antecedent mobile elements and target invading nucleic acids. CRISPR clusters are transcribed and processed into CRISPR RNA (crRNA). This protein processes pre-crRNA into individual crRNA units. The sequence is that of CRISPR-associated endoribonuclease Cas6 2 (cas6b) from Methanocaldococcus jannaschii (strain ATCC 43067 / DSM 2661 / JAL-1 / JCM 10045 / NBRC 100440) (Methanococcus jannaschii).